Here is a 233-residue protein sequence, read N- to C-terminus: Glyceraldehyde 3-phosphate phosphatase (233 aa).

This sequence belongs to the HAD-like hydrolase superfamily. Mg(2+) serves as cofactor.

Functionally, catalyzes the dephosphorylation of D,L-glyceraldehyde 3-phosphate in vitro. The protein is Glyceraldehyde 3-phosphate phosphatase of Methanopyrus kandleri (strain AV19 / DSM 6324 / JCM 9639 / NBRC 100938).